The chain runs to 297 residues: ATP synthase subunit a (297 aa).

8 helical membrane-spanning segments follow: residues 38-58 (PLIP…IAIL), 77-97 (GYVL…VDLL), 107-127 (LFII…VGGI), 133-153 (SSTV…IMGV), 174-194 (TIPL…LLSI), 202-222 (VLAG…FFTL), 230-250 (VGLV…HVYF), and 252-272 (ILVS…YWSQ).

The protein belongs to the ATPase A chain family. In terms of assembly, F-type ATPases have 2 components, CF(1) - the catalytic core - and CF(0) - the membrane proton channel. CF(1) has five subunits: alpha(3), beta(3), gamma(1), delta(1), epsilon(1). CF(0) has three main subunits: a(1), b(2) and c(9-12). The alpha and beta chains form an alternating ring which encloses part of the gamma chain. CF(1) is attached to CF(0) by a central stalk formed by the gamma and epsilon chains, while a peripheral stalk is formed by the delta and b chains.

It localises to the cell membrane. In terms of biological role, key component of the proton channel; it plays a direct role in the translocation of protons across the membrane. The chain is ATP synthase subunit a from Mycoplasmoides gallisepticum (strain R(low / passage 15 / clone 2)) (Mycoplasma gallisepticum).